The primary structure comprises 400 residues: Acetate kinase (400 aa).

Position 10 (Asn10) interacts with Mg(2+). Lys17 provides a ligand contact to ATP. Arg91 serves as a coordination point for substrate. Asp150 serves as the catalytic Proton donor/acceptor. Residues 210 to 214, 285 to 287, and 333 to 337 each bind ATP; these read HLGNG, DCR, and GIGEN. Glu387 serves as a coordination point for Mg(2+).

Belongs to the acetokinase family. As to quaternary structure, homodimer. It depends on Mg(2+) as a cofactor. Requires Mn(2+) as cofactor.

Its subcellular location is the cytoplasm. The enzyme catalyses acetate + ATP = acetyl phosphate + ADP. The protein operates within metabolic intermediate biosynthesis; acetyl-CoA biosynthesis; acetyl-CoA from acetate: step 1/2. In terms of biological role, catalyzes the formation of acetyl phosphate from acetate and ATP. Can also catalyze the reverse reaction. This is Acetate kinase from Pectobacterium atrosepticum (strain SCRI 1043 / ATCC BAA-672) (Erwinia carotovora subsp. atroseptica).